The following is a 546-amino-acid chain: Probable protein kinase UbiB (546 aa).

In terms of domain architecture, Protein kinase spans 124 to 502 (DFDIKPLASA…QARQGQSRYL (379 aa)). Residues 130–138 (LASASIAQV) and Lys-153 contribute to the ATP site. Catalysis depends on Asp-288, which acts as the Proton acceptor. Helical transmembrane passes span 499 to 519 (SRYL…LLIS) and 521 to 541 (VEAD…WIIG).

It belongs to the ABC1 family. UbiB subfamily.

It is found in the cell inner membrane. Its pathway is cofactor biosynthesis; ubiquinone biosynthesis [regulation]. In terms of biological role, is probably a protein kinase regulator of UbiI activity which is involved in aerobic coenzyme Q (ubiquinone) biosynthesis. The protein is Probable protein kinase UbiB of Pectobacterium carotovorum subsp. carotovorum (strain PC1).